Reading from the N-terminus, the 107-residue chain is Integration host factor subunit beta (107 aa).

Residues 55–107 (RRPARVGRNPKSGEKVQVPEKHVPHFKPGKELRERVDGRAGEPLKNDEPEDAQ) are disordered. A compositionally biased stretch (basic and acidic residues) spans 65–101 (KSGEKVQVPEKHVPHFKPGKELRERVDGRAGEPLKND).

Belongs to the bacterial histone-like protein family. As to quaternary structure, heterodimer of an alpha and a beta chain.

This protein is one of the two subunits of integration host factor, a specific DNA-binding protein that functions in genetic recombination as well as in transcriptional and translational control. This chain is Integration host factor subunit beta, found in Burkholderia pseudomallei (strain K96243).